Reading from the N-terminus, the 148-residue chain is UPF0179 protein VNG_1401C (148 aa).

The protein belongs to the UPF0179 family.

In Halobacterium salinarum (strain ATCC 700922 / JCM 11081 / NRC-1) (Halobacterium halobium), this protein is UPF0179 protein VNG_1401C.